The primary structure comprises 614 residues: MRTLMIHSDYLRYKTRSKTKIAEDIDDEKRVSGVDEALVAFIAVEKEDEENPELIINKAVKEILNVQNKVNAENIVIYPYAHLSSSLSNPDIAQKILKGIEAELLDNNEAVLRVPFGWYKSFELSCKGHPLSELSRTITTEPEEESEDSEEEPSEPSKMFILEEDGNIFDVEEYNYKNKTLRQLVDHEEGKTKDTGKQPPHVRLMREKELASNEPAADVGHIRWYPKGKLVKDLLSDYVYQLVTQRGAMPVETPVMYDLANPAIREHAEKFGERQYRLKTKHRELMLRFACCFGAFRILADSFLTWKNMPVGIYELSTFSFRFERQGEVVGLKRLRAFTMPDFHSVCLNDDHAREVFANQVDMCAQTETDLDVHYEVAFRVTQDFFDENEDWIKEVVKNNIKKPVLLEVIPKMKHYWNAKVDFAAIDDLGRPIENPTVQMDIQSAKRFGITYLDENEEQQYPTILHCSPTGSIERVICSLLEKTSTDKGNKPSLPLWLAPTQVRIIPVTDNHLDYAKEIYQQIRDSNIRVDIDDTAERVGKKIRNAGKEWIPYTIVVGDNEVENNSISVNRRVDNTKEEISIEDLAEEIHTLTKDMPFRQLPLPYMVSKRVKFD.

Positions 1 to 138 (MRTLMIHSDY…HPLSELSRTI (138 aa)) are editing domain. Positions 133 to 157 (ELSRTITTEPEEESEDSEEEPSEPS) are disordered. Over residues 141–154 (EPEEESEDSEEEPS) the composition is skewed to acidic residues. A catalytic region spans residues 200–495 (PHVRLMREKE…TDKGNKPSLP (296 aa)). Zn(2+) is bound by residues Cys-292, His-344, and His-466.

This sequence belongs to the class-II aminoacyl-tRNA synthetase family. As to quaternary structure, homodimer. Zn(2+) is required as a cofactor.

The protein localises to the cytoplasm. It catalyses the reaction tRNA(Thr) + L-threonine + ATP = L-threonyl-tRNA(Thr) + AMP + diphosphate + H(+). Functionally, catalyzes the attachment of threonine to tRNA(Thr) in a two-step reaction: L-threonine is first activated by ATP to form Thr-AMP and then transferred to the acceptor end of tRNA(Thr). Also edits incorrectly charged L-seryl-tRNA(Thr). The protein is Threonine--tRNA ligase of Methanosphaera stadtmanae (strain ATCC 43021 / DSM 3091 / JCM 11832 / MCB-3).